The following is a 928-amino-acid chain: DNA polymerase I (928 aa).

A 5'-3' exonuclease domain is found at 1–323; sequence MVQIPQNPLI…ADEAPEVTAT (323 aa). A 3'-5' exonuclease domain is found at 324 to 517; it reads VISYDNYVTI…LHLKMWPDLQ (194 aa). Residues 324 to 928 form a klenow fragment region; the sequence is VISYDNYVTI…GSGENWDQAH (605 aa). A polymerase region spans residues 521-928; sequence GPLNVFENIE…GSGENWDQAH (408 aa).

This sequence belongs to the DNA polymerase type-A family. In terms of assembly, single-chain monomer with multiple functions.

It catalyses the reaction DNA(n) + a 2'-deoxyribonucleoside 5'-triphosphate = DNA(n+1) + diphosphate. Its function is as follows. In addition to polymerase activity, this DNA polymerase exhibits 3'-5' and 5'-3' exonuclease activity. It is able to utilize nicked circular duplex DNA as a template and can unwind the parental DNA strand from its template. Functionally, genetic interactions among priB, dam, lexA, nagC, polA, rdgB, rdgB, rep and uup link the PriA-PriB replication restart pathway to DNA double-strand break repair. This Escherichia coli (strain K12) protein is DNA polymerase I (polA).